A 589-amino-acid polypeptide reads, in one-letter code: Pyruvate kinase (589 aa).

A substrate-binding site is contributed by Arg32. K(+)-binding residues include Asn34, Ser36, Asp66, and Thr67. 34–37 (NFSH) is a binding site for ATP. ATP-binding residues include Arg73 and Lys157. Glu223 contacts Mg(2+). Positions 246, 247, and 279 each coordinate substrate. Residue Asp247 coordinates Mg(2+).

It belongs to the pyruvate kinase family. This sequence in the C-terminal section; belongs to the PEP-utilizing enzyme family. Homotetramer. The cofactor is Mg(2+). K(+) serves as cofactor.

The catalysed reaction is pyruvate + ATP = phosphoenolpyruvate + ADP + H(+). It participates in carbohydrate degradation; glycolysis; pyruvate from D-glyceraldehyde 3-phosphate: step 5/5. Its activity is regulated as follows. Strongly activated by glucose-6-phosphate, ribose-5-phosphate and fructose-6-phosphate. Weak activator AMP and weak inhibitor fructose-1,6-bisphosphate can act as strong inhibitors in the presence of strong activators. The protein is Pyruvate kinase (pyk) of Lactobacillus delbrueckii subsp. bulgaricus.